The chain runs to 3890 residues: Extracellular matrix-binding protein EbhB (3890 aa).

An N-terminal signal peptide occupies residues 1–39; that stretch reads MNYRDKIQKFSIRKYTVGTFSTVIATLVFLGFNTSQAHA. Over residues 41 to 59 the composition is skewed to polar residues; sequence ETNQPASVVKQKQQSNNEQ. 4 disordered regions span residues 41 to 152, 249 to 277, 1347 to 1372, and 2418 to 2438; these read ETNQ…GNDN, MPQR…PRSV, NEKA…NATT, and TITP…TLTA. Residues 65–78 are compositionally biased toward low complexity; it reads SQVQNSQNSQNSQS. The segment covering 79–117 has biased composition (polar residues); it reads LSATHENEQPNNSQANLVNQKVAQSSTTNDEQPASQNVN. A compositionally biased stretch (basic and acidic residues) spans 130 to 140; the sequence is PDKEESKHKQN. 4 stretches are compositionally biased toward polar residues: residues 141-151, 250-266, 1360-1372, and 2427-2438; these read ESQSANKNGND, PQRQ…QTRS, YRTT…NATT, and HSVSSNPSTLTA. FIVAR domains lie at 2524-2580, 2610-2666, 2687-2750, 2780-2836, 2864-2919, 2947-3002, 3030-3085, 3154-3212, 3280-3339, 3407-3465, 3533-3591, 3659-3717, and 3785-3843; these read AKNH…VSDA, SKNN…ISDE, DTHA…VQSA, AKTK…IAAE, AKTQ…IRQN, AKNQ…INTN, AKTQ…INDK, AMTK…VNQK, AMTG…VNNA, AMGN…VNRA, AMGN…VTEA, AMNT…ITQK, and AMAN…VEAA.

The sequence is that of Extracellular matrix-binding protein EbhB (ebhB) from Staphylococcus aureus (strain N315).